Here is a 413-residue protein sequence, read N- to C-terminus: MDHLKRQDEKVFAAIEAELGRQRSKIELIASENFVSEAVMEAQGSVLTNKYAEGYPGKRYYGGCEHVDVVEDIARDRVKEIFGAEHVNVQPHSGAQANMAVYFTILEQGDTVLGMNLSHGGHLTHGSPVNFSGVQYNFVEYGVDAESHRINYDDVLAKAKEHKPKLIVAGASAYPRVIDFKRFREIADEVGAYLMVDMAHIAGLVAAGLHPNPVPHAHFVTTTTHKTLRGPRGGMILCEEQFAKQIDKSIFPGIQGGPLMHVIAAKAVAFGEALQDDFKTYAQNIINNANRLAEGLQKEGLTLVSGGTDNHLILIDVRNLEITGKVAEHVLDEVGITVNKNTIPFETASPFVTSGVRIGTAAVTSRGFGLEEMDEIASLIAYTLKNHENEAALEEARKRVEALTSKFPMYPNL.

(6S)-5,6,7,8-tetrahydrofolate is bound by residues L117 and 121–123 (GHL). N6-(pyridoxal phosphate)lysine is present on K226. (6S)-5,6,7,8-tetrahydrofolate contacts are provided by residues E239 and 349 to 351 (SPF).

The protein belongs to the SHMT family. As to quaternary structure, homodimer. Requires pyridoxal 5'-phosphate as cofactor.

It is found in the cytoplasm. The enzyme catalyses (6R)-5,10-methylene-5,6,7,8-tetrahydrofolate + glycine + H2O = (6S)-5,6,7,8-tetrahydrofolate + L-serine. The protein operates within one-carbon metabolism; tetrahydrofolate interconversion. It functions in the pathway amino-acid biosynthesis; glycine biosynthesis; glycine from L-serine: step 1/1. Catalyzes the reversible interconversion of serine and glycine with tetrahydrofolate (THF) serving as the one-carbon carrier. This reaction serves as the major source of one-carbon groups required for the biosynthesis of purines, thymidylate, methionine, and other important biomolecules. Also exhibits THF-independent aldolase activity toward beta-hydroxyamino acids, producing glycine and aldehydes, via a retro-aldol mechanism. In Bacillus cereus (strain AH187), this protein is Serine hydroxymethyltransferase.